The chain runs to 138 residues: Holo-[acyl-carrier-protein] synthase (138 aa).

The Mg(2+) site is built by Asp-8 and Glu-54.

The protein belongs to the P-Pant transferase superfamily. AcpS family. Mg(2+) is required as a cofactor.

It is found in the cytoplasm. The enzyme catalyses apo-[ACP] + CoA = holo-[ACP] + adenosine 3',5'-bisphosphate + H(+). Its function is as follows. Transfers the 4'-phosphopantetheine moiety from coenzyme A to a Ser of acyl-carrier-protein. The polypeptide is Holo-[acyl-carrier-protein] synthase (Roseiflexus sp. (strain RS-1)).